The chain runs to 315 residues: NADH-ubiquinone oxidoreductase chain 1 (315 aa).

8 consecutive transmembrane segments (helical) span residues 6–26 (FILS…SVAF), 80–100 (ISPI…PFFV), 107–127 (LGGL…MIAG), 153–173 (LALI…MYFF), 177–197 (IYIW…TISL), 229–249 (LIFM…CVIF), 253–273 (DVFN…FIWA), and 292–312 (CFLS…ILLF).

It belongs to the complex I subunit 1 family.

Its subcellular location is the mitochondrion inner membrane. It catalyses the reaction a ubiquinone + NADH + 5 H(+)(in) = a ubiquinol + NAD(+) + 4 H(+)(out). In terms of biological role, core subunit of the mitochondrial membrane respiratory chain NADH dehydrogenase (Complex I) that is believed to belong to the minimal assembly required for catalysis. Complex I functions in the transfer of electrons from NADH to the respiratory chain. The immediate electron acceptor for the enzyme is believed to be ubiquinone. The chain is NADH-ubiquinone oxidoreductase chain 1 (mt:ND1) from Drosophila persimilis (Fruit fly).